The chain runs to 104 residues: Large ribosomal subunit protein uL24 (104 aa).

Belongs to the universal ribosomal protein uL24 family. Part of the 50S ribosomal subunit.

Functionally, one of two assembly initiator proteins, it binds directly to the 5'-end of the 23S rRNA, where it nucleates assembly of the 50S subunit. One of the proteins that surrounds the polypeptide exit tunnel on the outside of the subunit. The polypeptide is Large ribosomal subunit protein uL24 (Pseudomonas entomophila (strain L48)).